The sequence spans 1223 residues: MEIPIQVAVRICPYTEPSENRKPVAGAEADASAFGNAEAKAESFSDSEDNKNDASNRQRPEESTDANGNSEGGRQLKKETLPTDSNGNENGTIVPLGSGCCVQAIPISASALGLPSALPGGRAQDSIAAGLIQVGAHTVPVTHALGSGTTQSQLYYQTVFPLISLFLEGFDASVVTYGQRGQGKTYTLYGPGFECVYGEADQGVVQRCVRDIFAHIAGHSERTYAVNVGFVEICEGEVCDLLDMGNVHCQSVEEVFRWLQIGLATRQPKSAHSLFTLTLEQQWVSKEGLIQHRLSTASFSDLCATERWGEPPPGNPRDAGLQMLELVVNTLTDPSIMYGVNGNIPYGQTTLTTLLKDSFGGRAQTLVILCVSPQEQHVAETLGNLQFAFKVQCVRNYVIMNTYSDDNTPISPETMPNGSSNPGAGPLAQVAAGDNFGLQFAASQWFKLVSNAEGLFAKLMASNLISELEKEQIEEWLFLKQECEECLSSTEAMRSQKQLVPIQEAEEPEESVSEPPNSDNDTDNESQRPDLADKLESLMEEFRAKTDALIQSKHAEFLTKHPKAVMQSQERDKESKLDAPPEKDKEKIEERKTSIAGRRRSIQPGASLSTAELALLNRVALQQPTAQPPPSVLDPESSIDPLESSAGEGLRQAAIAAAAANAPIEQLQKKLRKLHAEIEGRQRQLKEIEQTMQVKQNIISELVKNSDTRSHAKQRFQKKKAKLEAECDKAKKHLAKALIQGREKGETERWSAIIAHIEHRLEDLSSMKHIAGESGQKLKKLQQSMAESRKQQEELEKKIRKESKLRDQLETELAKLKESRDGASGGKELVKLDSPEQQGRQLKAVQARITHLNHILREKSDNLEECAGGEGPAPAQQESLRHEIRNLRGTRDLLLDERCHLDRKLKRDKMLTQREERKLLECDEAIEAIDAAIEFKNELICGHKSIDTSDRLQREKGEQMLMARLNKLSPEEMRTLLYKYFNKVIDLRDSSRKLELQLVQLERERDAWEWKERVLSNAVRQARLEGERNAVLLQRQHEMKLTLMLRHLAEETSASSASYGERALAPGHQTSSGDFDYELDFYKAAATTTTTTNHKALVKPPKSTPSGAALEKYKDKEQRGAGRNIFAKFQVLTRYASSAASAAAAGSCSSTVDESTALIESTTTATATTTTTTTTTTTGGKGKERGLPNIRQDQLKRLMPAPTVTKVTRQKNKIIIQDASRRN.

The 391-residue stretch at 4-394 (PIQVAVRICP…LQFAFKVQCV (391 aa)) folds into the Kinesin motor domain. Positions 13–90 (PYTEPSENRK…LPTDSNGNEN (78 aa)) are disordered. The span at 39–62 (AKAESFSDSEDNKNDASNRQRPEE) shows a compositional bias: basic and acidic residues. 178 to 185 (GQRGQGKT) serves as a coordination point for ATP. 3 disordered regions span residues 494 to 528 (RSQKQLVPIQEAEEPEESVSEPPNSDNDTDNESQR), 560 to 604 (KHPK…SIQP), and 625 to 646 (TAQPPPSVLDPESSIDPLESSA). Basic and acidic residues predominate over residues 569–593 (QERDKESKLDAPPEKDKEKIEERKT). Coiled-coil stretches lie at residues 658–743 (AAAN…QGRE), 773–825 (ESGQ…GASG), and 982–1015 (NKVIDLRDSSRKLELQLVQLERERDAWEWKERVL). Residues 774–799 (SGQKLKKLQQSMAESRKQQEELEKKI) are disordered. A compositionally biased stretch (basic and acidic residues) spans 787-799 (ESRKQQEELEKKI). Residues 1162 to 1178 (TTTATATTTTTTTTTTT) are compositionally biased toward low complexity. Residues 1162 to 1188 (TTTATATTTTTTTTTTTGGKGKERGLP) form a disordered region.

The protein belongs to the TRAFAC class myosin-kinesin ATPase superfamily. Kinesin family. KIF27 subfamily. Homodimer (Potential). Binds microtubules. Interacts with ci, smo, sgg, CkIalpha and protein kinase A catalytic subunit.

Its subcellular location is the cytoplasm. The protein localises to the cytoskeleton. In terms of biological role, regulates cubitus interruptus (ci) processing by recruiting multiple kinases to promote its efficient phosphorylation. Scaffolds multiple kinases and ci into proximity to promote its hyperphosphorylation, which then targets it for SCFSlimb/proteasome-mediated processing to generate its repressor form. Hh signaling inhibits ci phosphorylation by interfering with the cos-ci-kinases complex formation. This Drosophila pseudoobscura pseudoobscura (Fruit fly) protein is Kinesin-like protein costa (cos).